The chain runs to 908 residues: DNA mismatch repair protein MutS (908 aa).

An ATP-binding site is contributed by 662-669 (GPNMGGKS).

This sequence belongs to the DNA mismatch repair MutS family.

Functionally, this protein is involved in the repair of mismatches in DNA. It is possible that it carries out the mismatch recognition step. This protein has a weak ATPase activity. This is DNA mismatch repair protein MutS from Rhizobium etli (strain ATCC 51251 / DSM 11541 / JCM 21823 / NBRC 15573 / CFN 42).